Consider the following 62-residue polypeptide: Photosystem II reaction center protein Z (62 aa).

Transmembrane regions (helical) follow at residues 8-28 and 41-61; these read TLFA…VVFA and FSGI…NSFV.

It belongs to the PsbZ family. In terms of assembly, PSII is composed of 1 copy each of membrane proteins PsbA, PsbB, PsbC, PsbD, PsbE, PsbF, PsbH, PsbI, PsbJ, PsbK, PsbL, PsbM, PsbT, PsbY, PsbZ, Psb30/Ycf12, at least 3 peripheral proteins of the oxygen-evolving complex and a large number of cofactors. It forms dimeric complexes.

It is found in the plastid. Its subcellular location is the chloroplast thylakoid membrane. Its function is as follows. May control the interaction of photosystem II (PSII) cores with the light-harvesting antenna, regulates electron flow through the 2 photosystem reaction centers. PSII is a light-driven water plastoquinone oxidoreductase, using light energy to abstract electrons from H(2)O, generating a proton gradient subsequently used for ATP formation. The polypeptide is Photosystem II reaction center protein Z (Tupiella akineta (Green alga)).